The following is a 211-amino-acid chain: Ubiquitin-conjugating enzyme E2 S-B (211 aa).

The UBC core domain maps to 11–157; that stretch reads HIIRRVYKEV…ARLMTDIHAQ (147 aa). Residue Cys95 is the Glycyl thioester intermediate of the active site. Positions 158–211 are disordered; the sequence is GTSLRGKDPTDPCSSASTPVVSGDGPMAKKHAGDRDKKLAAKKKTDKKRALRRL. The span at 197 to 211 shows a compositional bias: basic residues; the sequence is AAKKKTDKKRALRRL.

Belongs to the ubiquitin-conjugating enzyme family.

The catalysed reaction is S-ubiquitinyl-[E1 ubiquitin-activating enzyme]-L-cysteine + [E2 ubiquitin-conjugating enzyme]-L-cysteine = [E1 ubiquitin-activating enzyme]-L-cysteine + S-ubiquitinyl-[E2 ubiquitin-conjugating enzyme]-L-cysteine.. It participates in protein modification; protein ubiquitination. Catalyzes the covalent attachment of ubiquitin to other proteins. Acts as an essential factor of the anaphase promoting complex/cyclosome (APC/C), a cell cycle-regulated ubiquitin ligase that controls progression through mitosis. Acts by specifically elongating 'Lys-11'-linked polyubiquitin chains initiated by the E2 enzyme ube2c/ubch10 on APC/C substrates, enhancing the degradation of APC/C substrates by the proteasome and promoting mitotic exit. This is Ubiquitin-conjugating enzyme E2 S-B (ube2s-b) from Xenopus laevis (African clawed frog).